The following is a 335-amino-acid chain: DNA-directed RNA polymerase subunit alpha (335 aa).

The alpha N-terminal domain (alpha-NTD) stretch occupies residues 1-231 (MVREKVTVST…DLFIPFLHME (231 aa)). An alpha C-terminal domain (alpha-CTD) region spans residues 262 to 335 (KKKLSLESIF…FALDLPKNLN (74 aa)).

It belongs to the RNA polymerase alpha chain family. In plastids the minimal PEP RNA polymerase catalytic core is composed of four subunits: alpha, beta, beta', and beta''. When a (nuclear-encoded) sigma factor is associated with the core the holoenzyme is formed, which can initiate transcription.

It localises to the plastid. It catalyses the reaction RNA(n) + a ribonucleoside 5'-triphosphate = RNA(n+1) + diphosphate. Its function is as follows. DNA-dependent RNA polymerase catalyzes the transcription of DNA into RNA using the four ribonucleoside triphosphates as substrates. The sequence is that of DNA-directed RNA polymerase subunit alpha from Cuscuta reflexa (Southern Asian dodder).